A 172-amino-acid polypeptide reads, in one-letter code: Myosin regulatory light chain 12B (172 aa).

The span at 1 to 16 shows a compositional bias: basic residues; sequence MSSKKAKTKTTKKRPQ. Residues 1–20 are disordered; it reads MSSKKAKTKTTKKRPQRATS. The residue at position 19 (Thr19) is a Phosphothreonine; by MLCK and ZIPK/DAPK3. Ser20 bears the Phosphoserine; by MLCK and ZIPK/DAPK3 mark. EF-hand domains are found at residues 29 to 64, 98 to 133, and 134 to 169; these read SQIQ…LGKN, DPED…MGDR, and FTDE…GAKD. Ca(2+) contacts are provided by Asp42, Asn44, Asp46, and Asp53.

As to quaternary structure, myosin is a hexamer of 2 heavy chains and 4 light chains: interacts with myosin heavy chain MYO19. In terms of processing, phosphorylation increases the actin-activated myosin ATPase activity and thereby regulates the contractile activity. It is required to generate the driving force in the migration of the cells but not necessary for localization of myosin-2 at the leading edge. Phosphorylation is reduced following epigallocatechin-3-O-gallate treatment.

Its function is as follows. Myosin regulatory subunit that plays an important role in regulation of both smooth muscle and nonmuscle cell contractile activity via its phosphorylation. Phosphorylation triggers actin polymerization in vascular smooth muscle. Implicated in cytokinesis, receptor capping, and cell locomotion. The sequence is that of Myosin regulatory light chain 12B (Myl12b) from Rattus norvegicus (Rat).